Consider the following 440-residue polypeptide: Thymidine phosphorylase (440 aa).

This sequence belongs to the thymidine/pyrimidine-nucleoside phosphorylase family. In terms of assembly, homodimer.

It carries out the reaction thymidine + phosphate = 2-deoxy-alpha-D-ribose 1-phosphate + thymine. The protein operates within pyrimidine metabolism; dTMP biosynthesis via salvage pathway; dTMP from thymine: step 1/2. Its function is as follows. The enzymes which catalyze the reversible phosphorolysis of pyrimidine nucleosides are involved in the degradation of these compounds and in their utilization as carbon and energy sources, or in the rescue of pyrimidine bases for nucleotide synthesis. The polypeptide is Thymidine phosphorylase (Yersinia pestis).